Here is a 461-residue protein sequence, read N- to C-terminus: tRNA modification GTPase MnmE (461 aa).

Lysine 32, glutamate 89, and lysine 128 together coordinate (6S)-5-formyl-5,6,7,8-tetrahydrofolate. In terms of domain architecture, TrmE-type G spans 224-387 (GHALSIVGKP…LGQKISAFFP (164 aa)). Residue asparagine 234 participates in K(+) binding. GTP contacts are provided by residues 234 to 239 (NAGKSS), 253 to 259 (SDIKGTT), and 278 to 281 (DTAG). Serine 238 lines the Mg(2+) pocket. Residues serine 253, isoleucine 255, and threonine 258 each contribute to the K(+) site. Threonine 259 provides a ligand contact to Mg(2+). Residue lysine 461 participates in (6S)-5-formyl-5,6,7,8-tetrahydrofolate binding.

This sequence belongs to the TRAFAC class TrmE-Era-EngA-EngB-Septin-like GTPase superfamily. TrmE GTPase family. Homodimer. Heterotetramer of two MnmE and two MnmG subunits. The cofactor is K(+).

It localises to the cytoplasm. Exhibits a very high intrinsic GTPase hydrolysis rate. Involved in the addition of a carboxymethylaminomethyl (cmnm) group at the wobble position (U34) of certain tRNAs, forming tRNA-cmnm(5)s(2)U34. This is tRNA modification GTPase MnmE from Helicobacter pylori (strain HPAG1).